The chain runs to 102 residues: Large ribosomal subunit protein mL63 (102 aa).

Belongs to the mitochondrion-specific ribosomal protein mL63 family.

The protein localises to the mitochondrion. The polypeptide is Large ribosomal subunit protein mL63 (Mrpl57) (Mus musculus (Mouse)).